The following is a 605-amino-acid chain: MGIIRELPEQLANRIAAGEVVERPASVVKELVENAIDAGATKVDVDLQEAGIRLIKVRDNGHGFHEEDAARAFLRHATSKIRDEHDLFRIRTLGFRGEALASIASVSHVLLKSKRADEDGFEMTLEGGVVKETNPTATNVGTEIAVSQLFFNTPARLKYLKTSATELASITDTLNRLALSHPEIRFTVFHEEKELLRTNGNGDLKQVMLAIYGRQVAAQIVTASSKTSDYTLSAHLVRPEVTRSNKQYVTLILNGRSIKNFALTQSVLEGYHTLLPIGRYPIAVLEVKMDPMLIDVNVHPTKREVRLSKEKELCQLIRETVQLTLREQRLIPSVKQEPKLKRVTPSEQSKLDFSMEPQPKQADSVEWNYPIPRERKETLTSPSQWNPAPLVHEPEAEMIEPEQVEESVRQSERLPALDVIGQLHSSYIICGAEDGMYVMDQHAAQERIKYELFYEQLGRPEKEYQLLLIPLTLEFTQEETLAIEEVLPLLAEAGITLEPFGGNTFLVREIPTWYPQHDLEGTIRDLVEMAIQQRSIDIAKYREEASILMACKRSIKANHPLNMEMMRQLIDDLSRTTSPFTCPHGRPILVKWSTYELEKLFKRVM.

Belongs to the DNA mismatch repair MutL/HexB family.

This protein is involved in the repair of mismatches in DNA. It is required for dam-dependent methyl-directed DNA mismatch repair. May act as a 'molecular matchmaker', a protein that promotes the formation of a stable complex between two or more DNA-binding proteins in an ATP-dependent manner without itself being part of a final effector complex. The sequence is that of DNA mismatch repair protein MutL from Exiguobacterium sp. (strain ATCC BAA-1283 / AT1b).